A 272-amino-acid polypeptide reads, in one-letter code: Bis(5'-nucleosyl)-tetraphosphatase, symmetrical (272 aa).

Belongs to the Ap4A hydrolase family.

It catalyses the reaction P(1),P(4)-bis(5'-adenosyl) tetraphosphate + H2O = 2 ADP + 2 H(+). Functionally, hydrolyzes diadenosine 5',5'''-P1,P4-tetraphosphate to yield ADP. The polypeptide is Bis(5'-nucleosyl)-tetraphosphatase, symmetrical (Shewanella frigidimarina (strain NCIMB 400)).